A 359-amino-acid polypeptide reads, in one-letter code: Peroxisome assembly protein 12 (359 aa).

The Peroxisomal matrix portion of the chain corresponds to 1–24 (MSTTIRASQLASSISPKTEEKQPS). The helical transmembrane segment at 25-52 (VFDIIAQENLATSIRPALQHLVKYLAFF) threads the bilayer. The Cytoplasmic portion of the chain corresponds to 53 to 56 (KPKT). Residues 57 to 81 (FLSVHRNFDEYYIIFDLILQNHYLR) form a helical membrane-spanning segment. Residues 82–106 (NYGASFTENFYSMKRIASGTGNPPN) lie on the Peroxisomal matrix side of the membrane. A helical transmembrane segment spans residues 107 to 128 (DGRERIMSLITLVGWPYVENKL). At 129-133 (NQLYD) the chain is on the cytoplasmic side. A helical transmembrane segment spans residues 134–184 (RLKEVYECRSWSSINGMKAKCQKMFVIIWPYIKTALKAVKSALQLAYILNR). The Peroxisomal matrix segment spans residues 185–253 (SSIHSPWLYF…ILGLPGIVSR (69 aa)). Residues 254–281 (LFAYGLFFVQFLDYMYNTDLAKLTKTGL) traverse the membrane as a helical segment. Over 282 to 359 (DGAIPSPPHK…NVQHLIRLFV (78 aa)) the chain is Cytoplasmic. The Zn(2+) site is built by C307, C310, C328, and C331. An RING-type; degenerate zinc finger spans residues 307-346 (CPICLKKRVNDTALFVSGYVFCYTCINQYVNTYNKCPVTG).

This sequence belongs to the pex2/pex10/pex12 family. As to quaternary structure, component of the PEX2-PEX10-PEX12 retrotranslocation channel.

It localises to the peroxisome membrane. The protein operates within protein modification; protein ubiquitination. In terms of biological role, component of a retrotranslocation channel required for peroxisome organization by mediating export of the PEX5/prx-5 receptor from peroxisomes to the cytosol, thereby promoting PEX5/prx-5 recycling. The retrotranslocation channel is composed of PEX2/prx-2, PEX10/prx-10 and PEX12/prx-12; each subunit contributing transmembrane segments that coassemble into an open channel that specifically allows the passage of PEX5/prx-5 through the peroxisomal membrane. PEX12/prx-12 also regulates PEX5/prx-5 recycling by activating the E3 ubiquitin-protein ligase activity of PEX10/prx-10. When PEX5 recycling is compromised, PEX12/prx-12 stimulates PEX10-mediated polyubiquitination of PEX5/prx-5, leading to its subsequent degradation. This chain is Peroxisome assembly protein 12 (prx-12), found in Caenorhabditis elegans.